The following is a 131-amino-acid chain: Small ribosomal subunit protein uS9 (131 aa).

It belongs to the universal ribosomal protein uS9 family.

The sequence is that of Small ribosomal subunit protein uS9 from Glaesserella parasuis serovar 5 (strain SH0165) (Haemophilus parasuis).